Reading from the N-terminus, the 261-residue chain is 5'-nucleotidase SurE (261 aa).

The a divalent metal cation site is built by Asp-12, Asp-13, Ser-43, and Asn-100.

The protein belongs to the SurE nucleotidase family. A divalent metal cation serves as cofactor.

The protein resides in the cytoplasm. The catalysed reaction is a ribonucleoside 5'-phosphate + H2O = a ribonucleoside + phosphate. Nucleotidase that shows phosphatase activity on nucleoside 5'-monophosphates. In Protochlamydia amoebophila (strain UWE25), this protein is 5'-nucleotidase SurE.